A 217-amino-acid chain; its full sequence is MPVIGEKFPEVEVKTTHGAIKLPDYYVEKGKWFVLFSHPADFTPVCTTEFVGFQKRYDEFRKLNTELIGLSIDQVFSHLKWVEWIKEKLNVEIEFPIIADDRGELAEKLGMISPYKGNNTVRAVFVVDNKGIIRAIIYYPQEVGRNLDEIVRLVKALQVSDEKGVAMPANWPENDLIGDKVIIPPASSVEEIKQRKEACEKGEIECLDWWFCYKKLD.

The Thioredoxin domain occupies 2 to 159; it reads PVIGEKFPEV…IVRLVKALQV (158 aa). Residue C46 is the Cysteine sulfenic acid (-SOH) intermediate of the active site. R122 contacts substrate. C206 and C212 are joined by a disulfide.

It belongs to the peroxiredoxin family. Prx6 subfamily. Homodecamer. Pentamer of dimers that assemble into a ring structure.

Its subcellular location is the cytoplasm. It catalyses the reaction a hydroperoxide + [thioredoxin]-dithiol = an alcohol + [thioredoxin]-disulfide + H2O. Thiol-specific peroxidase that catalyzes the reduction of hydrogen peroxide and organic hydroperoxides to water and alcohols, respectively. Plays a role in cell protection against oxidative stress by detoxifying peroxides. The protein is Peroxiredoxin of Methanocaldococcus jannaschii (strain ATCC 43067 / DSM 2661 / JAL-1 / JCM 10045 / NBRC 100440) (Methanococcus jannaschii).